Consider the following 376-residue polypeptide: Methionine import ATP-binding protein MetN 2 (376 aa).

The tract at residues 1-25 is disordered; it reads MTATAQRQRPIDTTGAGQRAQQAEL. Positions 34-273 constitute an ABC transporter domain; the sequence is VRFINLGKTY…PQHEVSKTLL (240 aa). ATP is bound at residue 70–77; the sequence is GRSGAGKS.

The protein belongs to the ABC transporter superfamily. Methionine importer (TC 3.A.1.24) family. In terms of assembly, the complex is composed of two ATP-binding proteins (MetN), two transmembrane proteins (MetI) and a solute-binding protein (MetQ).

Its subcellular location is the cell inner membrane. It carries out the reaction L-methionine(out) + ATP + H2O = L-methionine(in) + ADP + phosphate + H(+). The catalysed reaction is D-methionine(out) + ATP + H2O = D-methionine(in) + ADP + phosphate + H(+). In terms of biological role, part of the ABC transporter complex MetNIQ involved in methionine import. Responsible for energy coupling to the transport system. This is Methionine import ATP-binding protein MetN 2 from Pseudomonas syringae pv. syringae (strain B728a).